Consider the following 169-residue polypeptide: ALK and LTK ligand 2a (169 aa).

An N-terminal signal peptide occupies residues 1–25 (MRALRAPVLVMGLVLLICTAAQSDA). A disordered region spans residues 45–68 (ENSADDESAQKTESAPEPKDTHHL). Basic and acidic residues predominate over residues 52–67 (SAQKTESAPEPKDTHH). Intrachain disulfides connect Cys-130–Cys-166 and Cys-144–Cys-153.

The protein belongs to the ALKAL family. As to quaternary structure, homodimer. As to expression, expressed at high level in the notochord and iridophore stripes of the trunk, as well as in the eye and swim bladder.

The protein resides in the secreted. It is found in the cell membrane. Cytokine that acts as a physiological ligand for receptor tyrosine kinases LTK and ALK. Required for neural crest cell differentiation and iridophore development during embryonic iridophore development and adult stripe development by acting as a receptor for LTK. In Danio rerio (Zebrafish), this protein is ALK and LTK ligand 2a.